The primary structure comprises 583 residues: uncharacterized protein (583 aa).

Residue 24–140 participates in a nucleoside 3',5'-cyclic phosphate binding; sequence ILADIDDEQL…SAMLRAMARM (117 aa). One can recognise a PNPLA domain in the interval 309-469; the sequence is LVMAGGGARG…LNNLPANVMC (161 aa). Residues 313 to 318 carry the GXGXXG motif; sequence GGGARG. The GXSXG motif lies at 340-344; it reads GTSSG. Catalysis depends on serine 342, which acts as the Nucleophile. Aspartate 456 serves as the catalytic Proton acceptor. The DGA/G signature appears at 456 to 458; the sequence is DGG.

It belongs to the NTE family.

This is an uncharacterized protein from Mycobacterium tuberculosis (strain CDC 1551 / Oshkosh).